A 390-amino-acid polypeptide reads, in one-letter code: DNA replication and repair protein RecF (390 aa).

30–37 (GDNAQGKS) contributes to the ATP binding site.

This sequence belongs to the RecF family.

Its subcellular location is the cytoplasm. Its function is as follows. The RecF protein is involved in DNA metabolism; it is required for DNA replication and normal SOS inducibility. RecF binds preferentially to single-stranded, linear DNA. It also seems to bind ATP. This Trichodesmium erythraeum (strain IMS101) protein is DNA replication and repair protein RecF.